A 519-amino-acid chain; its full sequence is NADH-quinone oxidoreductase subunit N (519 aa).

Helical transmembrane passes span 22 to 42 (LLPM…EAFV), 53 to 73 (VLAL…TGLP), 87 to 107 (PTLF…LLIA), 141 to 161 (TEVF…PAAN), 163 to 183 (LITA…LAGM), 198 to 218 (YFLL…LVYG), 242 to 262 (IIVG…GVPF), 287 to 307 (VAAF…LAWD), 310 to 330 (PVIW…GITQ), 336 to 356 (LLAY…AATT), 363 to 383 (VLFY…IVIL), 406 to 426 (LVAG…PTSG), 442 to 461 (AGPL…YYYL), and 483 to 503 (GALA…LGIV).

This sequence belongs to the complex I subunit 2 family. As to quaternary structure, NDH-1 is composed of 14 different subunits. Subunits NuoA, H, J, K, L, M, N constitute the membrane sector of the complex.

Its subcellular location is the cell membrane. The catalysed reaction is a quinone + NADH + 5 H(+)(in) = a quinol + NAD(+) + 4 H(+)(out). In terms of biological role, NDH-1 shuttles electrons from NADH, via FMN and iron-sulfur (Fe-S) centers, to quinones in the respiratory chain. The immediate electron acceptor for the enzyme in this species is believed to be a menaquinone. Couples the redox reaction to proton translocation (for every two electrons transferred, four hydrogen ions are translocated across the cytoplasmic membrane), and thus conserves the redox energy in a proton gradient. This is NADH-quinone oxidoreductase subunit N from Acidothermus cellulolyticus (strain ATCC 43068 / DSM 8971 / 11B).